A 174-amino-acid chain; its full sequence is 16S rRNA aminocarboxypropyltransferase (174 aa).

S-adenosyl-L-methionine is bound by residues Thr-26, Leu-73, Leu-97, and Ser-116.

It belongs to the TDD superfamily. TSR3 family.

It localises to the cytoplasm. The enzyme catalyses an N(1)-methylpseudouridine in rRNA + S-adenosyl-L-methionine = N(1)-methyl-N(3)-[(3S)-3-amino-3-carboxypropyl]pseudouridine in rRNA + S-methyl-5'-thioadenosine + H(+). Its function is as follows. Aminocarboxypropyltransferase that catalyzes the aminocarboxypropyl transfer on pseudouridine corresponding to position 914 in M.jannaschii 16S rRNA. It constitutes the last step in biosynthesis of the hypermodified N1-methyl-N3-(3-amino-3-carboxypropyl) pseudouridine (m1acp3-Psi). The protein is 16S rRNA aminocarboxypropyltransferase of Methanosarcina acetivorans (strain ATCC 35395 / DSM 2834 / JCM 12185 / C2A).